The chain runs to 568 residues: Proton-coupled zinc antiporter SLC30A9, mitochondrial (568 aa).

Residues 1-67 (MLPGLAAAAA…IGTLSQVKLY (67 aa)) constitute a mitochondrion transit peptide. A run of 5 helical transmembrane segments spans residues 239–259 (VVMV…LAWI), 314–334 (GVGI…MGLL), 342–362 (LLWA…TLLV), 392–412 (VILL…TCMG), and 424–444 (SLGS…LIYT). The short motif at 462 to 466 (LTELL) is the LXXLL motif element.

Belongs to the cation diffusion facilitator (CDF) transporter (TC 2.A.4) family. SLC30A subfamily. Interacts with GRIP1, ESR1 and AR. Ubiquitously expressed in fetal and adult tissues and cancer cell lines.

It is found in the mitochondrion membrane. The protein localises to the nucleus. The protein resides in the endoplasmic reticulum. It catalyses the reaction Zn(2+)(in) + 2 H(+)(out) = Zn(2+)(out) + 2 H(+)(in). Functionally, mitochondrial proton-coupled zinc ion antiporter mediating the export of zinc from the mitochondria and involved in zinc homeostasis, zinc mobilization as well as mitochondrial morphology and health. In nucleus, functions as a secondary coactivator for nuclear receptors by cooperating with p160 coactivators subtypes. Plays a role in transcriptional activation of Wnt-responsive genes. The sequence is that of Proton-coupled zinc antiporter SLC30A9, mitochondrial from Homo sapiens (Human).